We begin with the raw amino-acid sequence, 468 residues long: Zinc finger protein mex-5 (468 aa).

Residues 1 to 19 (MKAASNSVSSAGGSVSPTT) are compositionally biased toward low complexity. The tract at residues 1-32 (MKAASNSVSSAGGSVSPTTTQPPLPPGQSSHP) is disordered. T186 is subject to Phosphothreonine; by mbk-2. Positions 243 to 254 (NHFHEHRGEKFG) are enriched in basic and acidic residues. The tract at residues 243–269 (NHFHEHRGEKFGRRGFPIPETDSQQPP) is disordered. 2 C3H1-type zinc fingers span residues 270-299 (NYKTRLCMMHASGIKPCDMGARCKFAHGLK) and 314-344 (KYKTKLCKNFARGGTGFCPYGLRCEFVHPTD). A disordered region spans residues 414-468 (DLQAGGDYNQPESNEDDLPPHLRRNRRENPPMNKRRTSLSTKWTSEENLGLRGHY). The segment covering 451-460 (SLSTKWTSEE) has biased composition (polar residues). The residue at position 458 (S458) is a Phosphoserine.

Interacts (when phosphorylated on Thr-186) with plk-1 (via POLO box domain) and plk-2 (via POLO box domain). Phosphorylation on Ser-458 by par-1 promotes localization of the protein to the anterior cytoplasm of the zygote. Phosphorylation by mbk-1 appears to be required for subsequent phosphorylation by plk-1. In terms of tissue distribution, asymmetrically localized to the anterior of the zygote before mitotic division, then differentially distributed to the somatic blastomere precursor cells.

Its subcellular location is the cytoplasm. Functionally, functions with mex-6 to affect embryonic viability, establish soma germline asymmetry in embryos and establish plk-1, pie-1, mex-1, and pos-1 asymmetry in embryos. Also affects formation of intestinal cells. Binds to mRNA in vitro, and inhibits pgl-3-mediated P-granule formation, probably by competing with pgl-3 for binding to mRNA. Required for neg-1 expression in anterior blastomeres during embryogenesis. This is Zinc finger protein mex-5 from Caenorhabditis elegans.